Here is a 406-residue protein sequence, read N- to C-terminus: Glutamyl-tRNA reductase (406 aa).

Residues 49–52 (TCHR), Ser-107, 112–114 (EPQ), and Gln-118 each bind substrate. Cys-50 (nucleophile) is an active-site residue. 187–192 (GAGETG) contributes to the NADP(+) binding site.

Belongs to the glutamyl-tRNA reductase family. In terms of assembly, homodimer.

It catalyses the reaction (S)-4-amino-5-oxopentanoate + tRNA(Glu) + NADP(+) = L-glutamyl-tRNA(Glu) + NADPH + H(+). Its pathway is porphyrin-containing compound metabolism; protoporphyrin-IX biosynthesis; 5-aminolevulinate from L-glutamyl-tRNA(Glu): step 1/2. Its function is as follows. Catalyzes the NADPH-dependent reduction of glutamyl-tRNA(Glu) to glutamate 1-semialdehyde (GSA). The sequence is that of Glutamyl-tRNA reductase from Thermomicrobium roseum (strain ATCC 27502 / DSM 5159 / P-2).